Reading from the N-terminus, the 386-residue chain is Homoserine O-succinyltransferase (386 aa).

Positions 49–358 constitute an AB hydrolase-1 domain; the sequence is NAILICHALS…DAEQGHDSFL (310 aa). Serine 156 acts as the Nucleophile in catalysis. Arginine 226 is a binding site for substrate. Active-site residues include aspartate 321 and histidine 354. Aspartate 355 lines the substrate pocket.

The protein belongs to the AB hydrolase superfamily. MetX family. In terms of assembly, homodimer.

The protein resides in the cytoplasm. It carries out the reaction L-homoserine + succinyl-CoA = O-succinyl-L-homoserine + CoA. It participates in amino-acid biosynthesis; L-methionine biosynthesis via de novo pathway; O-succinyl-L-homoserine from L-homoserine: step 1/1. Its function is as follows. Transfers a succinyl group from succinyl-CoA to L-homoserine, forming succinyl-L-homoserine. The protein is Homoserine O-succinyltransferase of Acinetobacter baumannii (strain SDF).